The primary structure comprises 899 residues: Protein translocase subunit SecA (899 aa).

ATP is bound by residues Q87, 105–109 (GEGKT), and D516. Zn(2+)-binding residues include C884, C886, C895, and H896.

This sequence belongs to the SecA family. Monomer and homodimer. Part of the essential Sec protein translocation apparatus which comprises SecA, SecYEG and auxiliary proteins SecDF. Other proteins may also be involved. Zn(2+) is required as a cofactor.

Its subcellular location is the cell inner membrane. The protein localises to the cytoplasm. The enzyme catalyses ATP + H2O + cellular proteinSide 1 = ADP + phosphate + cellular proteinSide 2.. Functionally, part of the Sec protein translocase complex. Interacts with the SecYEG preprotein conducting channel. Has a central role in coupling the hydrolysis of ATP to the transfer of proteins into and across the cell membrane, serving as an ATP-driven molecular motor driving the stepwise translocation of polypeptide chains across the membrane. The chain is Protein translocase subunit SecA from Borreliella burgdorferi (strain ATCC 35210 / DSM 4680 / CIP 102532 / B31) (Borrelia burgdorferi).